A 496-amino-acid polypeptide reads, in one-letter code: Lysine--tRNA ligase (496 aa).

Positions 403 and 410 each coordinate Mg(2+).

This sequence belongs to the class-II aminoacyl-tRNA synthetase family. In terms of assembly, homodimer. It depends on Mg(2+) as a cofactor.

Its subcellular location is the cytoplasm. The enzyme catalyses tRNA(Lys) + L-lysine + ATP = L-lysyl-tRNA(Lys) + AMP + diphosphate. This Aster yellows witches'-broom phytoplasma (strain AYWB) protein is Lysine--tRNA ligase.